The sequence spans 155 residues: Fibroblast growth factor 2 (155 aa).

A propeptide spanning residues 1-9 is cleaved from the precursor; that stretch reads MAAGSITTL. The segment covering 1 to 11 has biased composition (polar residues); it reads MAAGSITTLPT. The segment at 1-24 is disordered; it reads MAAGSITTLPTESEDGGNTPFSPG. Heparin-binding positions include 27 to 31 and 116 to 119; these read KDPKR and RSRK.

It belongs to the heparin-binding growth factors family.

Its subcellular location is the secreted. The protein localises to the nucleus. Its function is as follows. Acts as a ligand for FGFR1, FGFR2, FGFR3 and FGFR4. Also acts as an integrin ligand which is required for FGF2 signaling. Plays an important role in the regulation of cell survival, cell division, cell differentiation and cell migration. Functions as a potent mitogen in vitro. Can induce angiogenesis. The chain is Fibroblast growth factor 2 (fgf2) from Xenopus laevis (African clawed frog).